Consider the following 270-residue polypeptide: 4-hydroxy-tetrahydrodipicolinate reductase (270 aa).

NAD(+)-binding positions include 8 to 13 (GALGRM), Asp-34, 102 to 104 (GTT), and 128 to 131 (SQNY). The active-site Proton donor/acceptor is His-160. Residue His-161 participates in (S)-2,3,4,5-tetrahydrodipicolinate binding. Lys-164 functions as the Proton donor in the catalytic mechanism. 170–171 (GT) lines the (S)-2,3,4,5-tetrahydrodipicolinate pocket.

The protein belongs to the DapB family.

The protein localises to the cytoplasm. The enzyme catalyses (S)-2,3,4,5-tetrahydrodipicolinate + NAD(+) + H2O = (2S,4S)-4-hydroxy-2,3,4,5-tetrahydrodipicolinate + NADH + H(+). It carries out the reaction (S)-2,3,4,5-tetrahydrodipicolinate + NADP(+) + H2O = (2S,4S)-4-hydroxy-2,3,4,5-tetrahydrodipicolinate + NADPH + H(+). The protein operates within amino-acid biosynthesis; L-lysine biosynthesis via DAP pathway; (S)-tetrahydrodipicolinate from L-aspartate: step 4/4. Functionally, catalyzes the conversion of 4-hydroxy-tetrahydrodipicolinate (HTPA) to tetrahydrodipicolinate. This is 4-hydroxy-tetrahydrodipicolinate reductase from Methanococcus maripaludis (strain DSM 14266 / JCM 13030 / NBRC 101832 / S2 / LL).